The sequence spans 740 residues: Leucine-rich repeat neuronal protein 4 (740 aa).

The first 18 residues, 1–18, serve as a signal peptide directing secretion; sequence MRQTLPLLLLTVLRPSWA. Over 19–679 the chain is Extracellular; it reads DPPQEKVPLF…PCAAFTTKPS (661 aa). A glycan (N-linked (GlcNAc...) asparagine) is linked at Asn-42. LRR repeat units follow at residues 51–74, 75–97, 98–123, 125–144, 145–168, 174–197, 203–226, 228–251, 253–276, and 277–300; these read LPAA…GCLP, RTLR…ELGH, LEQL…GPAG, HTLD…TGPA, LSSL…AFAC, LLNL…AFAG, LVTL…WIRD, PKLT…IFKM, PNLQ…IFQD, and TPHL…TLDS. An N-linked (GlcNAc...) asparagine glycan is attached at Asn-176. Asn-289, Asn-379, and Asn-442 each carry an N-linked (GlcNAc...) asparagine glycan. Positions 389–517 are disordered; the sequence is VAPSAAPATR…QAPNPSLSEG (129 aa). Composition is skewed to polar residues over residues 430 to 454 and 490 to 514; these read APST…STTR and WDRS…NPSL. A Fibronectin type-III domain is found at 579–679; sequence IPDPPRLQGV…PCAAFTTKPS (101 aa). An N-linked (GlcNAc...) asparagine glycan is attached at Asn-622. A helical membrane pass occupies residues 680–700; the sequence is FALLLSGLCAASGLLLASTVV. At 701–740 the chain is on the cytoplasmic side; that stretch reads LSACLCRRGQTLGLQRCDTHLVAYKNPAFDDYPLGLQTVS.

Its subcellular location is the membrane. Functionally, may play an important role in hippocampus-dependent long-lasting memory. The chain is Leucine-rich repeat neuronal protein 4 (LRRN4) from Homo sapiens (Human).